Reading from the N-terminus, the 610-residue chain is UvrABC system protein C (610 aa).

The GIY-YIG domain occupies 16-94 (SQPGVYRMYD…IKLYQPRYNV (79 aa)). The 36-residue stretch at 204–239 (DQVLTQLISRMETASQNLEFEEAARIRDQIQAVRRV) folds into the UVR domain.

This sequence belongs to the UvrC family. Interacts with UvrB in an incision complex.

It is found in the cytoplasm. In terms of biological role, the UvrABC repair system catalyzes the recognition and processing of DNA lesions. UvrC both incises the 5' and 3' sides of the lesion. The N-terminal half is responsible for the 3' incision and the C-terminal half is responsible for the 5' incision. In Shigella boydii serotype 18 (strain CDC 3083-94 / BS512), this protein is UvrABC system protein C.